The sequence spans 69 residues: MIIVIIFLVIYFNNQLYMCVSSTCVIQWCAIQCKRKEANGIGTCKPRPNQGKIQYRKLKEECHCVYKCS.

The signal sequence occupies residues 1–15 (MIIVIIFLVIYFNNQ). 4 disulfides stabilise this stretch: cysteine 19/cysteine 68, cysteine 24/cysteine 44, cysteine 29/cysteine 62, and cysteine 33/cysteine 64.

This sequence belongs to the DEFL family.

It is found in the secreted. The polypeptide is Defensin-like protein 166 (Arabidopsis thaliana (Mouse-ear cress)).